A 76-amino-acid polypeptide reads, in one-letter code: Kappa-actitoxin-Avd4g (76 aa).

A signal peptide spans 1–19 (MNKALFLCLVVLCAAVVFA). The propeptide occupies 20–31 (AEDLQKAKHAPF). Cystine bridges form between cysteine 37/cysteine 72, cysteine 39/cysteine 65, and cysteine 55/cysteine 73.

It belongs to the sea anemone type 3 (BDS) potassium channel toxin family. As to expression, moderately expressed in the ectodermal tissue from the distal and proximal tentacles, body wall, and oral disk.

It localises to the secreted. It is found in the nematocyst. Blocks Kv3 voltage-gated potassium channels. Reduces blood pressure. The polypeptide is Kappa-actitoxin-Avd4g (Anemonia viridis (Snakelocks anemone)).